The following is a 251-amino-acid chain: Octanoyltransferase (251 aa).

The BPL/LPL catalytic domain maps to 56–241 (ADTGDEIWVV…NLDGASAAAD (186 aa)). Substrate is bound by residues 96–103 (RGGQITYH), 168–170 (ALG), and 181–183 (GLS). Cys-199 acts as the Acyl-thioester intermediate in catalysis.

It belongs to the LipB family.

It is found in the cytoplasm. It carries out the reaction octanoyl-[ACP] + L-lysyl-[protein] = N(6)-octanoyl-L-lysyl-[protein] + holo-[ACP] + H(+). It functions in the pathway protein modification; protein lipoylation via endogenous pathway; protein N(6)-(lipoyl)lysine from octanoyl-[acyl-carrier-protein]: step 1/2. In terms of biological role, catalyzes the transfer of endogenously produced octanoic acid from octanoyl-acyl-carrier-protein onto the lipoyl domains of lipoate-dependent enzymes. Lipoyl-ACP can also act as a substrate although octanoyl-ACP is likely to be the physiological substrate. The protein is Octanoyltransferase of Burkholderia cenocepacia (strain HI2424).